The chain runs to 207 residues: Ubiquinol-cytochrome c reductase iron-sulfur subunit (207 aa).

Residues 24-44 traverse the membrane as a helical segment; it reads LVAATSVVGAVGAGYALVPFV. In terms of domain architecture, Rieske spans 100 to 199; the sequence is PKLVDPTSEV…HVYLNDTTIL (100 aa). 4 residues coordinate [2Fe-2S] cluster: Cys134, His136, Cys162, and His165. Cys139 and Cys164 form a disulfide bridge.

The main subunits of complex b-c1 are: cytochrome b, cytochrome c1 and the Rieske protein. Requires [2Fe-2S] cluster as cofactor.

It is found in the cell membrane. The catalysed reaction is a quinol + 2 Fe(III)-[cytochrome c](out) = a quinone + 2 Fe(II)-[cytochrome c](out) + 2 H(+)(out). Its function is as follows. Component of the ubiquinol-cytochrome c reductase complex (complex III or cytochrome b-c1 complex), which is a respiratory chain that generates an electrochemical potential coupled to ATP synthesis. The protein is Ubiquinol-cytochrome c reductase iron-sulfur subunit (petA) of Allochromatium vinosum (strain ATCC 17899 / DSM 180 / NBRC 103801 / NCIMB 10441 / D) (Chromatium vinosum).